The following is a 466-amino-acid chain: Putative outer membrane protein NMB0088 (466 aa).

A signal peptide spans 1–24; the sequence is MTPSALKKTVLLLGTAFAAASVHA.

Belongs to the OmpP1/FadL family.

The protein localises to the cell outer membrane. The sequence is that of Putative outer membrane protein NMB0088 from Neisseria meningitidis serogroup B (strain ATCC BAA-335 / MC58).